We begin with the raw amino-acid sequence, 32 residues long: Cyclotide glopa A (32 aa).

Residues 1–32 (GGSIPCIETCVWTGCFLVPGCSCKSDKKCYLN) constitute a cross-link (cyclopeptide (Gly-Asn)). 3 cysteine pairs are disulfide-bonded: C6-C21, C10-C23, and C15-C29.

Post-translationally, this is a cyclic peptide.

Functionally, probably participates in a plant defense mechanism. The polypeptide is Cyclotide glopa A (Gloeospermum pauciflorum).